A 273-amino-acid chain; its full sequence is Putative expansin-B2 (273 aa).

The N-terminal stretch at 1–29 (MTILVVDRYYMLMNLLFALTCLLLNLTHC) is a signal peptide. Residue Asn36 is glycosylated (N-linked (GlcNAc...) asparagine). One can recognise an Expansin-like EG45 domain in the interval 65 to 173 (GGACGYGNAV…KKVECNYIGK (109 aa)). Disulfide bonds link Cys68-Cys97, Cys100-Cys168, and Cys105-Cys111. The region spanning 186-269 (NSFAVLVAYV…NWQPGAIYKS (84 aa)) is the Expansin-like CBD domain.

Belongs to the expansin family. Expansin B subfamily.

Its subcellular location is the secreted. The protein localises to the cell wall. It is found in the membrane. In terms of biological role, may cause loosening and extension of plant cell walls by disrupting non-covalent bonding between cellulose microfibrils and matrix glucans. No enzymatic activity has been found. The protein is Putative expansin-B2 (EXPB2) of Arabidopsis thaliana (Mouse-ear cress).